Here is a 105-residue protein sequence, read N- to C-terminus: Large ribosomal subunit protein uL24 (105 aa).

Belongs to the universal ribosomal protein uL24 family. Part of the 50S ribosomal subunit.

One of two assembly initiator proteins, it binds directly to the 5'-end of the 23S rRNA, where it nucleates assembly of the 50S subunit. In terms of biological role, one of the proteins that surrounds the polypeptide exit tunnel on the outside of the subunit. The sequence is that of Large ribosomal subunit protein uL24 from Rhodospirillum centenum (strain ATCC 51521 / SW).